The sequence spans 332 residues: Glycerol-3-phosphate dehydrogenase [NAD(P)+] (332 aa).

Positions 11, 12, 32, and 106 each coordinate NADPH. Sn-glycerol 3-phosphate-binding residues include lysine 106, glycine 137, and serine 139. Residue alanine 141 participates in NADPH binding. Positions 192, 245, 255, 256, and 257 each coordinate sn-glycerol 3-phosphate. Lysine 192 functions as the Proton acceptor in the catalytic mechanism. Arginine 256 contributes to the NADPH binding site. Residues valine 280 and glutamate 282 each contribute to the NADPH site.

It belongs to the NAD-dependent glycerol-3-phosphate dehydrogenase family.

It localises to the cytoplasm. It carries out the reaction sn-glycerol 3-phosphate + NAD(+) = dihydroxyacetone phosphate + NADH + H(+). It catalyses the reaction sn-glycerol 3-phosphate + NADP(+) = dihydroxyacetone phosphate + NADPH + H(+). Its pathway is membrane lipid metabolism; glycerophospholipid metabolism. In terms of biological role, catalyzes the reduction of the glycolytic intermediate dihydroxyacetone phosphate (DHAP) to sn-glycerol 3-phosphate (G3P), the key precursor for phospholipid synthesis. The sequence is that of Glycerol-3-phosphate dehydrogenase [NAD(P)+] from Staphylococcus aureus (strain bovine RF122 / ET3-1).